We begin with the raw amino-acid sequence, 255 residues long: Small ribosomal subunit protein eS4 (255 aa).

An S4 RNA-binding domain is found at Ile-43–Ile-115.

The protein belongs to the eukaryotic ribosomal protein eS4 family.

The sequence is that of Small ribosomal subunit protein eS4 from Hyperthermus butylicus (strain DSM 5456 / JCM 9403 / PLM1-5).